A 335-amino-acid chain; its full sequence is Tetraacyldisaccharide 4'-kinase (335 aa).

Thr58–Thr65 provides a ligand contact to ATP.

It belongs to the LpxK family.

It catalyses the reaction a lipid A disaccharide + ATP = a lipid IVA + ADP + H(+). The protein operates within glycolipid biosynthesis; lipid IV(A) biosynthesis; lipid IV(A) from (3R)-3-hydroxytetradecanoyl-[acyl-carrier-protein] and UDP-N-acetyl-alpha-D-glucosamine: step 6/6. Transfers the gamma-phosphate of ATP to the 4'-position of a tetraacyldisaccharide 1-phosphate intermediate (termed DS-1-P) to form tetraacyldisaccharide 1,4'-bis-phosphate (lipid IVA). The sequence is that of Tetraacyldisaccharide 4'-kinase from Shewanella frigidimarina (strain NCIMB 400).